A 1732-amino-acid polypeptide reads, in one-letter code: Transient receptor potential cation channel subfamily M member 3 (1732 aa).

Over 1–894 (MPGPWGTVYF…RKIYEFYNAP (894 aa)) the chain is Cytoplasmic. Calmodulin-binding regions lie at residues 41–64 (WTIR…QKSW), 192–215 (NFEL…MTTG), 300–323 (TGKY…QKIN), 601–624 (RKRF…KLLG), and 793–816 (RKNS…LEFK). The interval 617–625 (PKALKLLGM) is required for the inhibitory action of G-beta/gamma-subunits of heterotrimeric G-proteins. A 1,2-dioctanoyl-sn-glycero-3-phospho-(1D-myo-inositol-4,5-bisphosphate)-binding site is contributed by serine 796. Residues 829–851 (EIHLQEKEPEEPEKPTKEKDEED) are disordered. Positions 831 to 847 (HLQEKEPEEPEKPTKEK) are enriched in basic and acidic residues. Residues 895–918 (IVKFWFYTLAYIGYLMLFNYIVLV) form a helical membrane-spanning segment. The Extracellular portion of the chain corresponds to 919–925 (KMERWPS). The helical transmembrane segment at 926–948 (TQEWIVISYIFTLGIEKMREILM) threads the bilayer. The Cytoplasmic segment spans residues 949-964 (SEPGKLLQKVKVWLQE). The helical transmembrane segment at 965–985 (YWNVTDLIAILLFSVGMILRL) threads the bilayer. At 986-989 (QDQP) the chain is on the extracellular side. A helical membrane pass occupies residues 990-1013 (FRSDGRVIYCVNIIYWYIRLLDIF). At 1014–1028 (GVNKYLGPYVMMIGK) the chain is on the cytoplasmic side. Lysine 1017 and tyrosine 1018 together coordinate 1,2-dioctanoyl-sn-glycero-3-phospho-(1D-myo-inositol-4,5-bisphosphate). Residues 1029 to 1056 (MMIDMMYFVIIMLVVLMSFGVARQAILF) traverse the membrane as a helical segment. At 1057–1073 (PNEEPSWKLAKNIFYMP) the chain is on the extracellular side. Positions 1074–1101 (YWMIYGEVFADQIDPPCGQNETREDGKT) form an intramembrane region, pore-forming. Residues 1102 to 1111 (IQLPPCKTGA) are Extracellular-facing. Residues 1112–1137 (WIVPAIMACYLLVANILLVNLLIAVF) form a helical membrane-spanning segment. Residues 1138–1732 (NNTFFEVKSI…AFHSFESKHN (595 aa)) lie on the Cytoplasmic side of the membrane. The disordered stretch occupies residues 1610-1732 (EREAELSHPS…AFHSFESKHN (123 aa)). 2 stretches are compositionally biased toward polar residues: residues 1635 to 1653 (PISS…NNIT) and 1690 to 1701 (NTASLRNPFQRS).

The protein belongs to the transient receptor (TC 1.A.4) family. LTrpC subfamily. TRPM3 sub-subfamily. In terms of assembly, homotetramer. Interacts with TRPM1; the interaction results in the formation of a heteromultimeric cation channel complex that are functionally different from the homomeric channels.

It localises to the cell membrane. It carries out the reaction Ca(2+)(in) = Ca(2+)(out). The catalysed reaction is Mn(2+)(in) = Mn(2+)(out). The enzyme catalyses Zn(2+)(in) = Zn(2+)(out). It catalyses the reaction Mg(2+)(in) = Mg(2+)(out). It carries out the reaction Na(+)(in) = Na(+)(out). Activated by the neurosteroid pregnelonone sulfate (PregS). PregS activates the channel by shifting its current-voltage activation curve toward more negative membrane potentials and also potentiates temperature-induced activation. Activated by heat. Intracellular Ca(2+) inhibits TRPM3 probably via interaction with Ca(2+)/calmodulin. Intracellular Mg(2+) inhibits TRPM3 activity. Both intracellular and extracellular protons block TRPM3 through propable binding sites in the pore region. Positively regulated by phosphoinositide phosphoinositol 4,5-biphosphate (PI(4,5)P2). Strongly inhibited by activation of G(i)-coupled receptors via direct binding with G-beta/gamma-subunits of heterotrimeric G-proteins. With respect to regulation, insensitive to pregnenolone sulfate (PregS) or heat. Its activity is regulated as follows. Not inhibited by G-beta/gamma-subunits of heterotrimeric G-proteins. Constitutively active, non-selective divalent cation-conducting channel that is permeable to Ca(2+), Mn(2+), and Mg(2+), with a high permeability for Ca(2+). However, can be enhanced by increasing temperature and by ligands, including the endogenous neurosteroid pregnenolone sulfate and sphingosine-1 and suppressed by intracellular Mg(2+). Implicated in a variety of cellular processes, including insulin/peptide secretion, vascular constriction and dilation, noxious heat sensing, inflammatory and spontaneous pain sensitivity. In neurons of the dorsal root ganglia, functions as thermosensitive channel for the detection of noxious heat and spontaneous pain. Suggested to function as an ionotropic steroid receptor in beta-cell, indeed pregnenolone sulfate leads to Ca(2+) influx and enhanced insulin secretion. Mediates Zn(2+) uptake into the lumen of pancreatic beta cell secretory granules, thereby regulating insulin secretion. Forms heteromultimeric ion channels with TRPM1 which are permeable for Ca(2+) and Zn(2+) ions. Exists as multiple splice variants which differ significantly in their biophysical properties. Its function is as follows. Displays strongly reduced permeability for divalent cations and high selectivity toward monovalent cations. In terms of biological role, no channel activity. This chain is Transient receptor potential cation channel subfamily M member 3, found in Mus musculus (Mouse).